A 172-amino-acid chain; its full sequence is Ribosome maturation factor RimM (172 aa).

Positions 94–167 constitute a PRC barrel domain; it reads ENEFYLFQLK…FIKVELLPGM (74 aa).

It belongs to the RimM family. Binds ribosomal protein uS19.

Its subcellular location is the cytoplasm. Functionally, an accessory protein needed during the final step in the assembly of 30S ribosomal subunit, possibly for assembly of the head region. Essential for efficient processing of 16S rRNA. May be needed both before and after RbfA during the maturation of 16S rRNA. It has affinity for free ribosomal 30S subunits but not for 70S ribosomes. The protein is Ribosome maturation factor RimM of Carboxydothermus hydrogenoformans (strain ATCC BAA-161 / DSM 6008 / Z-2901).